The primary structure comprises 128 residues: Entry-fusion complex protein OPG094 (128 aa).

Residues 1–30 (MENVPNVYFNPVFIEPTFKHSLLSVYKHRL) lie on the Intravirion side of the membrane. A helical; Signal-anchor for type III membrane protein membrane pass occupies residues 31–51 (IVLFEVFVVFILIYVFFRSEL). Topologically, residues 52-107 (NMFFMHKRKIPDPIDRLRRANLACEDDKLMIYGLPWITTQTSALSINSKPIVYKDC) are virion surface. Cysteines 75 and 107 form a disulfide.

This sequence belongs to the orthopoxvirus OPG099 family. As to quaternary structure, interacts with OPG086. Component of the entry fusion complex (EFC) composed of OPG053, OPG076, OPG086, OPG094, OPG095, OPG099, OPG107, OPG143, OPG104J5, OPG147 and OPG155. Except for OPG095 and OPG053, each of the EFC proteins is required for assembly or stability of the complex. Post-translationally, most cysteines are linked by disulfide bonds. They are created by the viral disulfide bond formation pathway, a poxvirus-specific redox pathway that operates on the cytoplasmic side of the MV membranes. In terms of processing, unglycosylated because produced in viral factories instead of the classic ER -Golgi route.

The protein localises to the virion membrane. In terms of biological role, component of the entry fusion complex (EFC), which consists of 11 proteins. During cell infection, this complex mediates entry of the virion core into the host cytoplasm by a two-step mechanism consisting of lipid mixing of the viral and cellular membranes and subsequent pore formation. This is Entry-fusion complex protein OPG094 (OPG099) from Homo sapiens (Human).